Here is a 373-residue protein sequence, read N- to C-terminus: uncharacterized protein (373 aa).

The region spanning 15 to 101 is the WSC domain; it reads DFTYLGCYSS…SDSYSVYVDE (87 aa). 3 disordered regions span residues 101–171, 183–210, and 291–316; these read ESEE…SSLS, FSFS…ITTS, and NLSE…RGAA. Low complexity-rich tracts occupy residues 110-171 and 183-204; these read SSAQ…SSLS and FSFS…SSES.

This is an uncharacterized protein from Pichia angusta (Yeast).